The chain runs to 232 residues: NKG2-D type II integral membrane protein (232 aa).

Over 1–66 (MALIRDRKSH…IEKLKISPMF (66 aa)) the chain is Cytoplasmic. The helical; Signal-anchor for type II membrane protein transmembrane segment at 67 to 89 (VVRVLAIALAIRFTLNTLMWLAI) threads the bilayer. At 90 to 232 (FKETFQPVLC…NTYICMKRAV (143 aa)) the chain is on the extracellular side. 2 disulfides stabilise this stretch: Cys112/Cys121 and Cys115/Cys126. One can recognise a C-type lectin domain in the interval 122 to 228 (HRNNCYQFFN…CANLNTYICM (107 aa)). Residues Asn137, Asn147, and Asn179 are each glycosylated (N-linked (GlcNAc...) asparagine). 2 cysteine pairs are disulfide-bonded: Cys143/Cys227 and Cys205/Cys219.

As to quaternary structure, homodimer; disulfide-linked. Heterohexamer composed of two subunits of KLRK1 and four subunits of HCST/DAP10. Isoform 1 (via transmembrane domain) interacts with HCST/DAP10; the interaction is required for KLRK1 cell surface expression on activated CD8(+) T-cells, but is dispensable on activated TYROBP-expressing NK cells. Isoform 2 (via transmembrane domain) interacts with HCST/DAP10 (via transmembrane domain); the interaction is required for KLRK1 NK cell surface expression and induces NK cell-mediated cytotoxicity. Isoform 2 (via transmembrane domain) interacts with TYROBP (via transmembrane domain); the interaction is required for KLRK1 NK cell surface expression and induce NK cell-mediated cytotoxicity and cytokine secretion. Isoform 1 does not interact with TYROBP. Interacts with CEACAM1; recruits PTPN6 that dephosphorylates VAV1. As to expression, expressed in natural killer (NK) cells, activated CD8(+) alpha-beta and gamma-delta T-cells and natural killer T (NKT) cells (at protein level). May be expressed on dendritic cell (DC). Isoform 1 is strongly expressed in natural killer (NK) cells. Isoform 2 is weakly expressed in natural killer (NK) cells. Isoform 1 and isoform 2 are expressed in stimulated, but not in unstimulated, CD8(+) T-cells and macrophages.

Its subcellular location is the cell membrane. Functions as an activating and costimulatory receptor involved in immunosurveillance upon binding to various cellular stress-inducible ligands displayed at the surface of autologous tumor cells and virus-infected cells. Provides both stimulatory and costimulatory innate immune responses on activated killer (NK) cells, leading to cytotoxic activity. Acts as a costimulatory receptor for T-cell receptor (TCR) in CD8(+) T-cell-mediated adaptive immune responses by amplifying T-cell activation. Stimulates perforin-mediated elimination of ligand-expressing tumor cells. Signaling involves calcium influx, culminating in the expression of TNF-alpha. Participates in NK cell-mediated bone marrow graft rejection. May play a regulatory role in differentiation and survival of NK cells. Binds to ligands belonging to various subfamilies of MHC class I-related glycoproteins including RAET1A, RAET1B, RAET1C, RAET1D, RAET1E, H60 and MULT1. This Mus musculus (Mouse) protein is NKG2-D type II integral membrane protein (Klrk1).